Here is a 52-residue protein sequence, read N- to C-terminus: Teratocyte protein CftICK-I (52 aa).

An N-terminal signal peptide occupies residues 1–19; sequence MYKLCILFLVVIFAVMAIA. Disulfide bonds link C22–C37, C29–C41, and C36–C51.

In terms of tissue distribution, abundantly expressed by teratocytes, which are extra-embryonic cells released by parasitoid wasps into their hosts during larval eclosion.

The protein localises to the secreted. This endoparasitoid wasp peptide has immununosuppressive, antimicrobial and insecticidal activities. Suppress cellular immunity which is detectable as a reduction of hemocyte encapsulation in the host. Shows potent antifungal activity against C.albicans (MIC~0.25 ug/ml). In vivo, ingestion of this peptide (probably at excessive doses) increases larval mortality and reduces leaf consumption of D.saccharalis, a permissive host for C.flavipes. The chain is Teratocyte protein CftICK-I from Cotesia flavipes (Parasitic wasp).